We begin with the raw amino-acid sequence, 143 residues long: Endoribonuclease YbeY (143 aa).

Residues histidine 106, histidine 110, and histidine 116 each coordinate Zn(2+).

Belongs to the endoribonuclease YbeY family. Requires Zn(2+) as cofactor.

It is found in the cytoplasm. In terms of biological role, single strand-specific metallo-endoribonuclease involved in late-stage 70S ribosome quality control and in maturation of the 3' terminus of the 16S rRNA. This Petrotoga mobilis (strain DSM 10674 / SJ95) protein is Endoribonuclease YbeY.